A 74-amino-acid chain; its full sequence is UPF0154 protein LVIS_1358 (74 aa).

Residues 4–24 (WIWILIVIVVGLACAAGGFYG) form a helical membrane-spanning segment.

This sequence belongs to the UPF0154 family.

It is found in the cell membrane. The protein is UPF0154 protein LVIS_1358 of Levilactobacillus brevis (strain ATCC 367 / BCRC 12310 / CIP 105137 / JCM 1170 / LMG 11437 / NCIMB 947 / NCTC 947) (Lactobacillus brevis).